We begin with the raw amino-acid sequence, 900 residues long: Translation initiation factor IF-2 (900 aa).

Disordered stretches follow at residues 30–77 and 89–291; these read GEFV…SLDK and NGKA…YDSM. Residues 89 to 112 are compositionally biased toward low complexity; the sequence is NGKATAAPAKAADSGGAAIVSPTT. Over residues 113–129 the composition is skewed to pro residues; that stretch reads PAAPEPPTAVPPSPQAP. The segment covering 175–187 has biased composition (low complexity); it reads PGTARPGVPRPGA. A compositionally biased stretch (gly residues) spans 215–271; sequence GRPGAPGAGRSDAGGGNYRGGGVGAAPGTGFRGRPGGGGGGRPGQRGGAAGAFGRPG. Residues 275–284 are compositionally biased toward basic residues; sequence RRGRKSKRQK. The tr-type G domain maps to 396 to 567; the sequence is VRPPVVTVMG…AVLLTADAAL (172 aa). Residues 405-412 are G1; sequence GHVDHGKT. 405–412 contributes to the GTP binding site; the sequence is GHVDHGKT. A G2 region spans residues 430 to 434; sequence GITQH. The G3 stretch occupies residues 455–458; that stretch reads DTPG. Residues 455-459 and 509-512 each bind GTP; these read DTPGH and NKID. Residues 509 to 512 form a G4 region; the sequence is NKID. The tract at residues 545 to 547 is G5; sequence SAK.

This sequence belongs to the TRAFAC class translation factor GTPase superfamily. Classic translation factor GTPase family. IF-2 subfamily.

It localises to the cytoplasm. One of the essential components for the initiation of protein synthesis. Protects formylmethionyl-tRNA from spontaneous hydrolysis and promotes its binding to the 30S ribosomal subunits. Also involved in the hydrolysis of GTP during the formation of the 70S ribosomal complex. The protein is Translation initiation factor IF-2 of Mycobacterium bovis (strain BCG / Pasteur 1173P2).